Here is a 353-residue protein sequence, read N- to C-terminus: Guanine nucleotide-binding protein subunit beta-5 (353 aa).

7 WD repeats span residues 61–100, 103–142, 151–192, 194–236, 237–276, 278–320, and 323–352; these read GHGNKVLCMDWCKDKRRIVSSSQDGKVIVWDSFTTNKEHA, MPCTWVMACAYAPSGCAIACGGLDNKCSVYPLTFDKNENM, MHTN…QSFH, HGAD…QAFE, THESDVNSVRYYPSGDAFASGSDDATCRLYDLRADREVAI, SKES…RVSI, and GHENRVSTLRVSPDGTAFCSGSWDHTLRVW.

It belongs to the WD repeat G protein beta family. Component of a complex composed of RGS9 (isoform RGS9-1), GNB5 and RGS9BP; within this complex, the presence of GNB5 stabilizes both itself and RGS9 and increases RGS9 GTPase-activating protein (GAP) activity. Interacts with RGS7, forming the RGS7-GNB5 complex; within this complex, the presence of GNB5 increases RGS7 GTPase-activating protein (GAP) activity. Interacts with GPR158; promotes the GTPase activator activity of the RGS7-GNB5 complex in absence of glycine, in contrast GTPase activator activity of the RGS7-GNB5 complex is inhibited in presence of glycine. Interacts with RGS6. Detected in brain.

Its subcellular location is the membrane. In terms of biological role, enhances GTPase-activating protein (GAP) activity of regulator of G protein signaling (RGS) proteins, such as RGS7 and RGS9, hence involved in the termination of the signaling initiated by the G protein coupled receptors (GPCRs) by accelerating the GTP hydrolysis on the G-alpha subunits, thereby promoting their inactivation. Increases RGS7 GTPase-activating protein (GAP) activity, thereby regulating mood and cognition. Increases RGS9 GTPase-activating protein (GAP) activity, hence contributes to the deactivation of G protein signaling initiated by D(2) dopamine receptors. May play an important role in neuronal signaling, including in the parasympathetic, but not sympathetic, control of heart rate. The chain is Guanine nucleotide-binding protein subunit beta-5 (Gnb5) from Rattus norvegicus (Rat).